Reading from the N-terminus, the 244-residue chain is Lactate utilization protein A (244 aa).

It belongs to the LutA/YkgE family.

Its function is as follows. Is involved in L-lactate degradation and allows cells to grow with lactate as the sole carbon source. The protein is Lactate utilization protein A of Halalkalibacterium halodurans (strain ATCC BAA-125 / DSM 18197 / FERM 7344 / JCM 9153 / C-125) (Bacillus halodurans).